Here is a 609-residue protein sequence, read N- to C-terminus: 1-deoxy-D-xylulose-5-phosphate synthase (609 aa).

Thiamine diphosphate is bound by residues histidine 77 and 118–120 (GHS). Residue aspartate 149 participates in Mg(2+) binding. Thiamine diphosphate-binding positions include 150–151 (GA), asparagine 178, tyrosine 259, and glutamate 342. Residue asparagine 178 participates in Mg(2+) binding.

Belongs to the transketolase family. DXPS subfamily. Homodimer. Mg(2+) is required as a cofactor. Requires thiamine diphosphate as cofactor.

It carries out the reaction D-glyceraldehyde 3-phosphate + pyruvate + H(+) = 1-deoxy-D-xylulose 5-phosphate + CO2. It participates in metabolic intermediate biosynthesis; 1-deoxy-D-xylulose 5-phosphate biosynthesis; 1-deoxy-D-xylulose 5-phosphate from D-glyceraldehyde 3-phosphate and pyruvate: step 1/1. Its function is as follows. Catalyzes the acyloin condensation reaction between C atoms 2 and 3 of pyruvate and glyceraldehyde 3-phosphate to yield 1-deoxy-D-xylulose-5-phosphate (DXP). In Listeria monocytogenes serotype 4b (strain CLIP80459), this protein is 1-deoxy-D-xylulose-5-phosphate synthase.